We begin with the raw amino-acid sequence, 542 residues long: MEIPVREERRSSSSSAGPLQQTISLAADDAIDSGPSSPLVVKVSVFETEHETTKLIHAPSTLLGETTGDADFPPIQSFRDAKLVCVVETSKLWEIAAPIAFNILCNYGVNSFTSIFVGHIGDLELSAVAIALSVVSNFSFGFLLGMASALETLCGQAFGAGQMDMLGVYMQRSWLILLGTSVCLLPLYIYATPLLILLGQEPEIAEISGKFTTQIIPQMFALAINFPTQKFLQSQSKVGIMAWIGFFALTLHIFILYLFINVFKWGLNGAAAAFDVSAWGIAIAQVVYVVGWCKDGWKGLSWLAFQDVWPFLKLSFASAVMLCLEIWYFMTIIVLTGHLEDPVIAVGSLSICMNINGWEGMLFIGINAAISVRVSNELGSGHPRAAKYSVIVTVIESLVIGVVCAIVILITRDDFAVIFTESEEMRKAVADLAYLLGITMILNSLQPVISGVAVGGGWQAPVAYINLFCYYAFGLPLGFLLGYKTSLGVQGIWIGMICGTSLQTLILLYMIYITNWNKEVEQASERMKQWGAGYEKLEKIAT.

A run of 12 helical transmembrane segments spans residues 97-117, 127-147, 176-196, 204-224, 240-260, 272-292, 316-336, 344-364, 390-410, 435-455, 462-482, and 491-511; these read APIA…SIFV, AVAI…LGMA, ILLG…PLLI, IAEI…ALAI, IMAW…YLFI, AAFD…VVGW, FASA…IVLT, IAVG…MLFI, VIVT…VILI, LLGI…VAVG, VAYI…FLLG, and GIWI…LYMI.

This sequence belongs to the multi antimicrobial extrusion (MATE) (TC 2.A.66.1) family.

It localises to the membrane. The chain is Protein DETOXIFICATION 34 from Arabidopsis thaliana (Mouse-ear cress).